The following is a 128-amino-acid chain: NADH-quinone oxidoreductase subunit A (128 aa).

3 consecutive transmembrane segments (helical) span residues 9-29 (FPIA…LALA), 68-88 (LLFI…VLLL), and 96-116 (LGWA…AGLV).

The protein belongs to the complex I subunit 3 family. As to quaternary structure, NDH-1 is composed of 14 different subunits. Subunits NuoA, H, J, K, L, M, N constitute the membrane sector of the complex.

The protein localises to the cell inner membrane. The catalysed reaction is a quinone + NADH + 5 H(+)(in) = a quinol + NAD(+) + 4 H(+)(out). Its function is as follows. NDH-1 shuttles electrons from NADH, via FMN and iron-sulfur (Fe-S) centers, to quinones in the respiratory chain. The immediate electron acceptor for the enzyme in this species is believed to be ubiquinone. Couples the redox reaction to proton translocation (for every two electrons transferred, four hydrogen ions are translocated across the cytoplasmic membrane), and thus conserves the redox energy in a proton gradient. In Anaeromyxobacter sp. (strain Fw109-5), this protein is NADH-quinone oxidoreductase subunit A.